Here is an 86-residue protein sequence, read N- to C-terminus: Large ribosomal subunit protein bL27 (86 aa).

This sequence belongs to the bacterial ribosomal protein bL27 family.

The polypeptide is Large ribosomal subunit protein bL27 (Christiangramia forsetii (strain DSM 17595 / CGMCC 1.15422 / KT0803) (Gramella forsetii)).